The chain runs to 107 residues: uncharacterized protein (107 aa).

The interval 87 to 107 is disordered; that stretch reads KNRNGPKAEKRRPYVRAHAKW.

This is an uncharacterized protein from Saccharomyces cerevisiae (strain ATCC 204508 / S288c) (Baker's yeast).